Here is a 656-residue protein sequence, read N- to C-terminus: Anion exchange transporter (656 aa).

The Cytoplasmic portion of the chain corresponds to 1-75 (MTGAKRKKKS…LAFAVLSSVH (75 aa)). A helical membrane pass occupies residues 76–96 (PVFGLYGSLFPAIIYAIFGMG). Over 97–144 (HHVATGTFALTSLISANAVERIVPQNMQNLTTQSNTSVLGLSDFEMQR) the chain is Extracellular. Residues 145–165 (IHVAAAVSFLGGVIQVAMFVL) traverse the membrane as a helical segment. Glutamine 166 is a topological domain (cytoplasmic). The helical transmembrane segment at 167 to 187 (LGSATFVVTEPVISAMTTGAA) threads the bilayer. Topologically, residues 188 to 202 (THVVTSQVKYLLGMK) are extracellular. Residues 203–223 (MPYISGPLGFFYIYAYVFENI) traverse the membrane as a helical segment. Over 224 to 227 (KSVR) the chain is Cytoplasmic. Residues 228 to 248 (LEALLLSLLSIVVLVLVKELN) form a helical membrane-spanning segment. Topologically, residues 249–254 (EQFKRK) are extracellular. Residues 255 to 275 (IKVVLPVDLVLIIAASFACYC) traverse the membrane as a helical segment. Topologically, residues 276-306 (TNMENTYGLEVVGHIPQGIPSPRAPPMNILS) are cytoplasmic. The chain crosses the membrane as a helical span at residues 307–327 (AVITEAFGVALVGYVASLALA). The Extracellular portion of the chain corresponds to 328-343 (QGSAKKFKYSIDDNQE). The helical transmembrane segment at 344–364 (FLAHGLSNIVSSFFFCIPSAA) threads the bilayer. Residues 365–383 (AMGRTAGLYSTGAKTQVAC) lie on the Cytoplasmic side of the membrane. 2 consecutive transmembrane segments (helical) span residues 384–404 (LISC…LYWL) and 405–425 (PMCV…IQFR). The Extracellular segment spans residues 426-448 (DLKKYWNVDKIDWGIWVSTYVFT). A helical transmembrane segment spans residues 449-469 (ICFAANVGLLFGVVCTIAIVI). Residues 470-656 (GRFPRAMTVS…LSKLSDHSEV (187 aa)) are Cytoplasmic-facing. The STAS domain maps to 492–641 (TEMDSETLQQ…ESVSAAISHI (150 aa)). A membrane targeting region spans residues 641 to 656 (IHSNKNLSKLSDHSEV).

This sequence belongs to the SLC26A/SulP transporter (TC 2.A.53) family. As to expression, expressed in the thyroid gland (at protein level). Expressed in tonsillar high endothelial venule endothelial cells (HEVEC), placenta and in testis, expressed in a subgroup of basal cells in the epididymal ducts.

It localises to the basolateral cell membrane. The protein resides in the recycling endosome membrane. It is found in the apical cell membrane. Its subcellular location is the lateral cell membrane. It carries out the reaction chloride(in) = chloride(out). The enzyme catalyses iodide(out) = iodide(in). It catalyses the reaction bromide(in) = bromide(out). The catalysed reaction is oxalate(in) = oxalate(out). It carries out the reaction nitrate(in) = nitrate(out). The enzyme catalyses sulfate(in) = sulfate(out). It catalyses the reaction thiocyanate(in) = thiocyanate(out). The catalysed reaction is D-gluconate(in) = D-gluconate(out). It carries out the reaction hydrogencarbonate(in) = hydrogencarbonate(out). The enzyme catalyses hydrogencarbonate(in) + chloride(out) = hydrogencarbonate(out) + chloride(in). With respect to regulation, is active at both alkaline and acidic pH. Activity is inhibited by 4,4'-Di-isothiocyanatostilbene-2,2'-disulfonic acid (DIDS - an inhibitor of several anion channels and transporters). Its function is as follows. Acts as an anion channel mediating the transport of chloride, sulfate and oxalate ions. Mediates the transport of bromide, iodide, nitrate, gluconate, thiocyanate and bicarbonate ions. Its permeability towards bicarbonate is weak and increases when pH is above 7. Mediates thiocyanate transport in retinal pigment epithelium cells. Mediates iodide transport in the thyroid gland, playing an important role in the synthesis of thyroid hormones and the maintenance of thyroid function. Although it is an anion channel, according to PubMed:12736153 and PubMed:32119864 it has been shown to exhibit chloride-bicarbonate exchanger activity. This is Anion exchange transporter from Homo sapiens (Human).